Here is a 75-residue protein sequence, read N- to C-terminus: Penaeidin-3m (75 aa).

A signal peptide spans 1–19 (MRLVVCLVFLASFALVCQG). A Pyrrolidone carboxylic acid modification is found at Gln-20. Cystine bridges form between Cys-44–Cys-59, Cys-48–Cys-66, and Cys-60–Cys-67. Ser-74 bears the Serine amide mark.

Belongs to the penaeidin family.

Its subcellular location is the cytoplasmic granule. Antibacterial and antifungal activity. Presents chitin-binding activity. This chain is Penaeidin-3m, found in Penaeus setiferus (Atlantic white shrimp).